A 429-amino-acid polypeptide reads, in one-letter code: Histidine--tRNA ligase (429 aa).

The protein belongs to the class-II aminoacyl-tRNA synthetase family. As to quaternary structure, homodimer.

The protein resides in the cytoplasm. The enzyme catalyses tRNA(His) + L-histidine + ATP = L-histidyl-tRNA(His) + AMP + diphosphate + H(+). The polypeptide is Histidine--tRNA ligase (Pseudomonas putida (strain GB-1)).